The chain runs to 284 residues: 4-hydroxy-3-methylbut-2-enyl diphosphate reductase (284 aa).

Cys12 serves as a coordination point for [4Fe-4S] cluster. (2E)-4-hydroxy-3-methylbut-2-enyl diphosphate is bound by residues His40 and His72. Dimethylallyl diphosphate-binding residues include His40 and His72. 2 residues coordinate isopentenyl diphosphate: His40 and His72. Position 94 (Cys94) interacts with [4Fe-4S] cluster. Position 122 (His122) interacts with (2E)-4-hydroxy-3-methylbut-2-enyl diphosphate. His122 lines the dimethylallyl diphosphate pocket. His122 provides a ligand contact to isopentenyl diphosphate. The Proton donor role is filled by Glu124. Thr161 is a binding site for (2E)-4-hydroxy-3-methylbut-2-enyl diphosphate. Position 193 (Cys193) interacts with [4Fe-4S] cluster. (2E)-4-hydroxy-3-methylbut-2-enyl diphosphate-binding residues include Ser221, Asn223, and Ser264. Residues Ser221, Asn223, and Ser264 each contribute to the dimethylallyl diphosphate site. Isopentenyl diphosphate is bound by residues Ser221, Asn223, and Ser264.

The protein belongs to the IspH family. Requires [4Fe-4S] cluster as cofactor.

The catalysed reaction is isopentenyl diphosphate + 2 oxidized [2Fe-2S]-[ferredoxin] + H2O = (2E)-4-hydroxy-3-methylbut-2-enyl diphosphate + 2 reduced [2Fe-2S]-[ferredoxin] + 2 H(+). The enzyme catalyses dimethylallyl diphosphate + 2 oxidized [2Fe-2S]-[ferredoxin] + H2O = (2E)-4-hydroxy-3-methylbut-2-enyl diphosphate + 2 reduced [2Fe-2S]-[ferredoxin] + 2 H(+). The protein operates within isoprenoid biosynthesis; dimethylallyl diphosphate biosynthesis; dimethylallyl diphosphate from (2E)-4-hydroxy-3-methylbutenyl diphosphate: step 1/1. It participates in isoprenoid biosynthesis; isopentenyl diphosphate biosynthesis via DXP pathway; isopentenyl diphosphate from 1-deoxy-D-xylulose 5-phosphate: step 6/6. Functionally, catalyzes the conversion of 1-hydroxy-2-methyl-2-(E)-butenyl 4-diphosphate (HMBPP) into a mixture of isopentenyl diphosphate (IPP) and dimethylallyl diphosphate (DMAPP). Acts in the terminal step of the DOXP/MEP pathway for isoprenoid precursor biosynthesis. The sequence is that of 4-hydroxy-3-methylbut-2-enyl diphosphate reductase from Dehalococcoides mccartyi (strain CBDB1).